Consider the following 666-residue polypeptide: Semaphorin-7A (666 aa).

The disordered stretch occupies residues 1-21 (MTPPPPGRAAPSAPRARVPGP). Residues 1-44 (MTPPPPGRAAPSAPRARVPGPPARLGLPLRLRLLLLLWAAAASA) form the signal peptide. Low complexity predominate over residues 9-21 (AAPSAPRARVPGP). In terms of domain architecture, Sema spans 53 to 490 (RIFAVWKGHV…SQWEVSQVPL (438 aa)). An N-linked (GlcNAc...) asparagine glycan is attached at Asn105. A disulfide bridge links Cys120 with Cys126. Arg135 is subject to Asymmetric dimethylarginine. Cys143 and Cys152 are oxidised to a cystine. N-linked (GlcNAc...) asparagine glycans are attached at residues Asn157 and Asn258. Cystine bridges form between Cys266-Cys366, Cys291-Cys335, Cys493-Cys511, Cys500-Cys541, Cys503-Cys518, Cys566-Cys613, and Cys587-Cys596. Residues 267-269 (RGD) are interaction with integrins. Positions 267-269 (RGD) match the Cell attachment site motif. N-linked (GlcNAc...) asparagine glycosylation is present at Asn330. The Ig-like C2-type domain occupies 544–629 (PKPDKAPLQK…YFREAQHWQL (86 aa)). N-linked (GlcNAc...) asparagine glycosylation is present at Asn602. The GPI-anchor amidated alanine moiety is linked to residue Ala648. A propeptide spans 649–666 (ASLWLGVLPTLTLGLLVH) (removed in mature form).

The protein belongs to the semaphorin family. Interacts with ITGA1 and ITGB1. Interacts with PLXNC1. As to expression, detected in skin keratinocytes and on endothelial cells from skin blood vessels (at protein level). Expressed in fibroblasts, keratinocytes, melanocytes, placenta, testis, ovary, spleen, brain, spinal cord, lung, heart, adrenal gland, lymph nodes, thymus, intestine and kidney.

Its subcellular location is the cell membrane. Its function is as follows. Plays an important role in integrin-mediated signaling and functions both in regulating cell migration and immune responses. Promotes formation of focal adhesion complexes, activation of the protein kinase PTK2/FAK1 and subsequent phosphorylation of MAPK1 and MAPK3. Promotes production of pro-inflammatory cytokines by monocytes and macrophages. Plays an important role in modulating inflammation and T-cell-mediated immune responses. Promotes axon growth in the embryonic olfactory bulb. Promotes attachment, spreading and dendrite outgrowth in melanocytes. In Homo sapiens (Human), this protein is Semaphorin-7A (SEMA7A).